Here is a 323-residue protein sequence, read N- to C-terminus: Lipoyl synthase (323 aa).

7 residues coordinate [4Fe-4S] cluster: Cys53, Cys58, Cys64, Cys79, Cys83, Cys86, and Ser293. The 218-residue stretch at 65 to 282 (WTKKQATVMI…AATARAKGFS (218 aa)) folds into the Radical SAM core domain.

Belongs to the radical SAM superfamily. Lipoyl synthase family. The cofactor is [4Fe-4S] cluster.

The protein localises to the cytoplasm. The catalysed reaction is [[Fe-S] cluster scaffold protein carrying a second [4Fe-4S](2+) cluster] + N(6)-octanoyl-L-lysyl-[protein] + 2 oxidized [2Fe-2S]-[ferredoxin] + 2 S-adenosyl-L-methionine + 4 H(+) = [[Fe-S] cluster scaffold protein] + N(6)-[(R)-dihydrolipoyl]-L-lysyl-[protein] + 4 Fe(3+) + 2 hydrogen sulfide + 2 5'-deoxyadenosine + 2 L-methionine + 2 reduced [2Fe-2S]-[ferredoxin]. It participates in protein modification; protein lipoylation via endogenous pathway; protein N(6)-(lipoyl)lysine from octanoyl-[acyl-carrier-protein]: step 2/2. Catalyzes the radical-mediated insertion of two sulfur atoms into the C-6 and C-8 positions of the octanoyl moiety bound to the lipoyl domains of lipoate-dependent enzymes, thereby converting the octanoylated domains into lipoylated derivatives. This chain is Lipoyl synthase, found in Zymomonas mobilis subsp. mobilis (strain ATCC 31821 / ZM4 / CP4).